Consider the following 186-residue polypeptide: Photosystem I assembly protein Ycf4 (186 aa).

Transmembrane regions (helical) follow at residues 22–42 (FCWA…GTSS) and 57–77 (IIFF…LFIS).

The protein belongs to the Ycf4 family.

Its subcellular location is the plastid. It is found in the chloroplast thylakoid membrane. Functionally, seems to be required for the assembly of the photosystem I complex. This is Photosystem I assembly protein Ycf4 from Vitis vinifera (Grape).